The primary structure comprises 605 residues: DNA primase (605 aa).

The CHC2-type zinc-finger motif lies at 38-62; the sequence is CPFHDEKTPSFTVSEDKQICHCFGC. The Toprim domain occupies 260 to 341; that stretch reads DEIVLLEGFM…NVFVIQLPSG (82 aa). Mg(2+) contacts are provided by Glu266, Asp310, and Asp312.

The protein belongs to the DnaG primase family. As to quaternary structure, monomer. Interacts with DnaB. Zn(2+) serves as cofactor. The cofactor is Mg(2+).

The enzyme catalyses ssDNA + n NTP = ssDNA/pppN(pN)n-1 hybrid + (n-1) diphosphate.. RNA polymerase that catalyzes the synthesis of short RNA molecules used as primers for DNA polymerase during DNA replication. This chain is DNA primase, found in Staphylococcus aureus (strain MSSA476).